The following is a 290-amino-acid chain: MKFAIFGNTYQAKKSSHAATLFKLLEKHGAEICVCREFHRFLKSDLKLNVKADDLFDENNFDADMVISIGGDGTFLKAARRVGNKGIPILGINTGRLGFLADVSPEEMEETIEEVYQNHYTVEERSVLQLLCDDKHLQNSPYALNEIAILKRDSSSMISIRTAINGAHLTTYQADGLIIATPTGSTAYSLSVGGPIIVPHSKTIAITPVAPHSLNVRPIVICDDWEITLDVESRSHNFLVAIDGSSETCKETTRLTIRRADYSIKVVKRFNHIFFDTLRTKMMWGADSRV.

D72 acts as the Proton acceptor in catalysis. NAD(+) contacts are provided by residues 72-73 (DG), K77, 145-146 (NE), D175, 186-191 (TAYSLS), and A210.

It belongs to the NAD kinase family. Requires a divalent metal cation as cofactor.

Its subcellular location is the cytoplasm. The catalysed reaction is NAD(+) + ATP = ADP + NADP(+) + H(+). Functionally, involved in the regulation of the intracellular balance of NAD and NADP, and is a key enzyme in the biosynthesis of NADP. Catalyzes specifically the phosphorylation on 2'-hydroxyl of the adenosine moiety of NAD to yield NADP. The protein is NAD kinase of Bacteroides fragilis (strain ATCC 25285 / DSM 2151 / CCUG 4856 / JCM 11019 / LMG 10263 / NCTC 9343 / Onslow / VPI 2553 / EN-2).